We begin with the raw amino-acid sequence, 255 residues long: MSVISMKQLLEAGVHFGHQTRRWNPKMKPYIFTERNGIHVIDLQKTVKLVDDAYNYVKNASQEGAVVLFVGTKKQAAEAVKEEALRAGQYYVNHRWLGGMLTNWNTIQTRVTRLKEINKMEEEGTFEVLPKKEVVLLNKERERLEKFIGGIADMPRIPDVMYIVDPHAEQIAVKEAKTLGIPVVAMVDTNADPEPIDVVIPANDDAIRAVKLITAKMADAIIEGRQGEDAADDFVAEEAASEESLEELAEIVEGK.

Residues 233 to 255 are disordered; that stretch reads DFVAEEAASEESLEELAEIVEGK.

This sequence belongs to the universal ribosomal protein uS2 family.

This is Small ribosomal subunit protein uS2 (rpsB) from Lactococcus lactis subsp. lactis (strain IL1403) (Streptococcus lactis).